A 416-amino-acid polypeptide reads, in one-letter code: Phosphoglycerate kinase (416 aa).

Residues 24–26 (DLN), R40, 63–66 (HLGR), R122, and R162 each bind substrate. Residues K212, G300, E331, and 360 to 363 (GGDS) contribute to the ATP site.

The protein belongs to the phosphoglycerate kinase family. As to quaternary structure, monomer.

Its subcellular location is the cytoplasm. The catalysed reaction is (2R)-3-phosphoglycerate + ATP = (2R)-3-phospho-glyceroyl phosphate + ADP. The protein operates within carbohydrate degradation; glycolysis; pyruvate from D-glyceraldehyde 3-phosphate: step 2/5. This is Phosphoglycerate kinase from Mycobacterium ulcerans (strain Agy99).